We begin with the raw amino-acid sequence, 72 residues long: Large ribosomal subunit protein bL31 (72 aa).

Zn(2+) contacts are provided by cysteine 16, cysteine 18, cysteine 37, and cysteine 40.

The protein belongs to the bacterial ribosomal protein bL31 family. Type A subfamily. Part of the 50S ribosomal subunit. Requires Zn(2+) as cofactor.

In terms of biological role, binds the 23S rRNA. The polypeptide is Large ribosomal subunit protein bL31 (Buchnera aphidicola subsp. Schizaphis graminum (strain Sg)).